Here is a 585-residue protein sequence, read N- to C-terminus: Type IV pilus assembly ATPase TfpB (585 aa).

346–351 (GSGKTT) serves as a coordination point for ATP. Residues Cys476, Cys479, Cys511, and Cys514 each coordinate Zn(2+).

The protein belongs to the GSP E family.

The protein localises to the cytoplasm. Its function is as follows. ATPase component of the type IV pilus (T4P). Acts as a molecular motor to provide the energy that is required for biogenesis of the pilus and the extrusion of substrates generated in the cytoplasm. TfpB is required for optimal T4P extension and, consequently, efficient natural transformation. May play a role in initiating T4P extension. This Acinetobacter baylyi (strain ATCC 33305 / BD413 / ADP1) protein is Type IV pilus assembly ATPase TfpB.